Reading from the N-terminus, the 598-residue chain is Elongation factor 4 (598 aa).

Residues 5-187 (SHIRNFSIIA…RLVATIPAPI (183 aa)) enclose the tr-type G domain. GTP contacts are provided by residues 17-22 (DHGKST) and 134-137 (NKID).

Belongs to the TRAFAC class translation factor GTPase superfamily. Classic translation factor GTPase family. LepA subfamily.

Its subcellular location is the cell inner membrane. It catalyses the reaction GTP + H2O = GDP + phosphate + H(+). Its function is as follows. Required for accurate and efficient protein synthesis under certain stress conditions. May act as a fidelity factor of the translation reaction, by catalyzing a one-codon backward translocation of tRNAs on improperly translocated ribosomes. Back-translocation proceeds from a post-translocation (POST) complex to a pre-translocation (PRE) complex, thus giving elongation factor G a second chance to translocate the tRNAs correctly. Binds to ribosomes in a GTP-dependent manner. In Pseudomonas fluorescens (strain Pf0-1), this protein is Elongation factor 4.